The chain runs to 239 residues: Probable transcriptional regulatory protein MG332 (239 aa).

It belongs to the TACO1 family.

The protein localises to the cytoplasm. This chain is Probable transcriptional regulatory protein MG332, found in Mycoplasma genitalium (strain ATCC 33530 / DSM 19775 / NCTC 10195 / G37) (Mycoplasmoides genitalium).